The chain runs to 515 residues: MIPVSLLVVVVGGWTAVYLADLVLKSSVYFKHSYEDWLENNGLSISPFHIRWQTSIFNRAFYSWGRRKARMLYQWFNFGMVFGVIAMFSSFFLLGKTLMQTLAQMMADSPSPYSSSSSSSSSSSSSSSSSSSLHNEQVLQVVVPGINLPVNQLTYFFAAVLISGVVHEIGHGIAAIREQVRFNGFGIFLFIIYPGAFVDLFTTHLQLISPVQQLRIFCAGIWHNFVLALLGILALVLLPVILLPFYYTGVGVLITEVAEDSPAIGPRGLFVGDLVTHLQDCPVTNVQDWNECLDTIAYEPQIGYCISASTLQQLSFPVRAYKRLDGSTECCNNHSLTDVCFSYRNNFNKRLHTCLPARKAVEATQVCRSNKDCKSGASSSFCIVPSLETHTRLIKVKHPPQIDMLYVGHPLHLHYTVSITSFIPRFNFLSIDLPVIVETFVKYLISLSGALAIVNAVPCFALDGQWILNSFLDATLTSVIGDNDVKDLIGFFILLGGSVLLAANVTLGLWMVTAR.

Over 1–3 the chain is Cytoplasmic; sequence MIP. Residues 4–24 traverse the membrane as a helical segment; it reads VSLLVVVVGGWTAVYLADLVL. Over 25-74 the chain is Lumenal; the sequence is KSSVYFKHSYEDWLENNGLSISPFHIRWQTSIFNRAFYSWGRRKARMLYQ. Helical transmembrane passes span 75–95 and 96–107; these read WFNF…FLLG and KTLMQTLAQMMA. Topologically, residues 108-140 are lumenal; sequence DSPSPYSSSSSSSSSSSSSSSSSSSLHNEQVLQ. A helical membrane pass occupies residues 141–165; it reads VVVPGINLPVNQLTYFFAAVLISGV. Position 167 (His167) interacts with Zn(2+). Residue Glu168 is part of the active site. Helical transmembrane passes span 170 to 182, 183 to 205, and 225 to 247; these read GHGI…QVRF, NGFG…TTHL, and FVLA…PFYY. His171 serves as a coordination point for Zn(2+). Topologically, residues 248–442 are lumenal; that stretch reads TGVGVLITEV…LPVIVETFVK (195 aa). N-linked (GlcNAc...) asparagine glycosylation is present at Asn333. A run of 2 helical transmembrane segments spans residues 443–460 and 461–472; these read YLIS…VPCF and ALDGQWILNSFL. At 473-488 the chain is on the lumenal side; the sequence is DATLTSVIGDNDVKDL. Residues 489 to 509 traverse the membrane as a helical segment; the sequence is IGFFILLGGSVLLAANVTLGL. Residues 510–515 are Cytoplasmic-facing; it reads WMVTAR.

Belongs to the peptidase M50A family. Zn(2+) is required as a cofactor.

Its subcellular location is the membrane. The protein localises to the cytoplasm. The protein resides in the golgi apparatus membrane. The enzyme catalyses Cleaves several transcription factors that are type-2 transmembrane proteins within membrane-spanning domains. Known substrates include sterol regulatory element-binding protein (SREBP) -1, SREBP-2 and forms of the transcriptional activator ATF6. SREBP-2 is cleaved at the site 477-DRSRILL-|-CVLTFLCLSFNPLTSLLQWGGA-505. The residues Asn-Pro, 11 residues distal to the site of cleavage in the membrane-spanning domain, are important for cleavage by S2P endopeptidase. Replacement of either of these residues does not prevent cleavage, but there is no cleavage if both of these residues are replaced.. Zinc metalloprotease that mediates intramembrane proteolysis of proteins such as ATF6, ATF6B, SREBF1/SREBP1 and SREBF2/SREBP2. Catalyzes the second step in the proteolytic activation of the sterol regulatory element-binding proteins (SREBPs) SREBF1/SREBP1 and SREBF2/SREBP2: cleaves SREBPs within the first transmembrane segment, thereby releasing the N-terminal segment with a portion of the transmembrane segment attached. Mature N-terminal SREBP fragments shuttle to the nucleus and activate gene transcription. Also mediates the second step in the proteolytic activation of the cyclic AMP-dependent transcription factor ATF-6 (ATF6 and ATF6B). Involved in intramembrane proteolysis during bone formation. In astrocytes and osteoblasts, upon DNA damage and ER stress, mediates the second step of the regulated intramembrane proteolytic activation of the transcription factor CREB3L1, leading to the inhibition of cell-cycle progression. This Mus musculus (Mouse) protein is Membrane-bound transcription factor site-2 protease (Mbtps2).